The primary structure comprises 396 residues: MAKAKFERTKPHVNIGTIGHVDHGKTTLTAAITKVLHDKYPDLNESRAFDQIDNAPEERQRGITINISHVEYQTDKRHYAHVDAPGHADYIKNMITGAAQMDGAILVVAATDGPMPQTREHVLLARQVGVPYILVALNKADMVDDEELLELVEMEVRELLAAQEFDEDAPVVRVSALKALEGDAKWVESVEQLMEAVDESIPDPVRETDKPFLMPVEDVFTITGRGTVVTGRVERGVINVNEEVEIVGIRPSSTKTTVTGVEMFRKLLDQGQAGDNVGLLLRGIKREDVERGQVVTKPGTTTPHTEFEGQVYILSKDEGGRHTPFFNNYRPQFYFRTTDVTGVVTLPEGTEMVMPGDNTNISVKLIQPVAMDEGLRFAIREGGRTVGAGRVVKIIK.

One can recognise a tr-type G domain in the interval 10 to 205 (KPHVNIGTIG…AVDESIPDPV (196 aa)). The tract at residues 19–26 (GHVDHGKT) is G1. 19 to 26 (GHVDHGKT) contributes to the GTP binding site. T26 is a Mg(2+) binding site. Positions 62-66 (GITIN) are G2. The interval 83–86 (DAPG) is G3. GTP contacts are provided by residues 83–87 (DAPGH) and 138–141 (NKAD). A G4 region spans residues 138 to 141 (NKAD). Residues 175 to 177 (SAL) form a G5 region.

Belongs to the TRAFAC class translation factor GTPase superfamily. Classic translation factor GTPase family. EF-Tu/EF-1A subfamily. Monomer.

It localises to the cytoplasm. The enzyme catalyses GTP + H2O = GDP + phosphate + H(+). In terms of biological role, GTP hydrolase that promotes the GTP-dependent binding of aminoacyl-tRNA to the A-site of ribosomes during protein biosynthesis. The chain is Elongation factor Tu from Mycobacterium avium (strain 104).